The sequence spans 758 residues: Probable adenosylcobalamin-dependent ribonucleoside-triphosphate reductase (758 aa).

Cys194 and Cys459 are oxidised to a cystine. The tract at residues 233-256 (IIIKGQLPPPPPQQQPQQQQQQHG) is disordered. Residues Cys448 and Glu450 contribute to the active site.

This sequence belongs to the class II ribonucleoside-triphosphate reductase family. Monomer. Adenosylcob(III)alamin is required as a cofactor.

The enzyme catalyses a 2'-deoxyribonucleoside 5'-triphosphate + [thioredoxin]-disulfide + H2O = a ribonucleoside 5'-triphosphate + [thioredoxin]-dithiol. The protein is Probable adenosylcobalamin-dependent ribonucleoside-triphosphate reductase (rtpR) of Dictyostelium discoideum (Social amoeba).